The primary structure comprises 391 residues: Phosphoglycerate kinase (391 aa).

Residues 16 to 18, Arg31, 54 to 57, Arg108, and Arg141 contribute to the substrate site; these read DLN and HLGR. ATP contacts are provided by residues Lys192, Glu314, and 340 to 343; that span reads GGDT.

The protein belongs to the phosphoglycerate kinase family. As to quaternary structure, monomer.

Its subcellular location is the cytoplasm. It carries out the reaction (2R)-3-phosphoglycerate + ATP = (2R)-3-phospho-glyceroyl phosphate + ADP. It participates in carbohydrate degradation; glycolysis; pyruvate from D-glyceraldehyde 3-phosphate: step 2/5. The sequence is that of Phosphoglycerate kinase from Coxiella burnetii (strain RSA 493 / Nine Mile phase I).